We begin with the raw amino-acid sequence, 74 residues long: Acyl carrier protein (74 aa).

The 73-residue stretch at 1-73 (MAVFEKVQEI…DLVAYVEEQA (73 aa)) folds into the Carrier domain. Position 35 is an O-(pantetheine 4'-phosphoryl)serine (serine 35).

Belongs to the acyl carrier protein (ACP) family. In terms of processing, 4'-phosphopantetheine is transferred from CoA to a specific serine of apo-ACP by AcpS. This modification is essential for activity because fatty acids are bound in thioester linkage to the sulfhydryl of the prosthetic group.

The protein resides in the cytoplasm. It participates in lipid metabolism; fatty acid biosynthesis. Carrier of the growing fatty acid chain in fatty acid biosynthesis. This is Acyl carrier protein from Streptococcus pneumoniae serotype 4 (strain ATCC BAA-334 / TIGR4).